The sequence spans 392 residues: Formate-dependent phosphoribosylglycinamide formyltransferase (392 aa).

N(1)-(5-phospho-beta-D-ribosyl)glycinamide is bound by residues glutamate 22 to leucine 23 and glutamate 82. Residues arginine 114, lysine 155, serine 160–glutamine 165, glutamate 195–valine 198, and glutamate 203 contribute to the ATP site. In terms of domain architecture, ATP-grasp spans arginine 119–leucine 308. Mg(2+)-binding residues include glutamate 267 and glutamate 279. Residues aspartate 286, lysine 355, and arginine 362–arginine 363 each bind N(1)-(5-phospho-beta-D-ribosyl)glycinamide.

This sequence belongs to the PurK/PurT family. As to quaternary structure, homodimer.

The catalysed reaction is N(1)-(5-phospho-beta-D-ribosyl)glycinamide + formate + ATP = N(2)-formyl-N(1)-(5-phospho-beta-D-ribosyl)glycinamide + ADP + phosphate + H(+). Its pathway is purine metabolism; IMP biosynthesis via de novo pathway; N(2)-formyl-N(1)-(5-phospho-D-ribosyl)glycinamide from N(1)-(5-phospho-D-ribosyl)glycinamide (formate route): step 1/1. Functionally, involved in the de novo purine biosynthesis. Catalyzes the transfer of formate to 5-phospho-ribosyl-glycinamide (GAR), producing 5-phospho-ribosyl-N-formylglycinamide (FGAR). Formate is provided by PurU via hydrolysis of 10-formyl-tetrahydrofolate. This Escherichia coli O157:H7 protein is Formate-dependent phosphoribosylglycinamide formyltransferase.